The following is a 170-amino-acid chain: Protein BofC (170 aa).

The first 30 residues, 1–30 (MKRFSTAYLLLGILCSAAVFLIGAPSRALG), serve as a signal peptide directing secretion.

Monomer.

It is found in the forespore intermembrane space. In terms of biological role, inhibits the SpoIVB zymogen from undergoing autocatalytic activation by an unknown mechanism, and in this way plays a role in the sigma-K checkpoint of sporulation. The polypeptide is Protein BofC (bofC) (Bacillus subtilis (strain 168)).